A 369-amino-acid polypeptide reads, in one-letter code: Ubiquitin-conjugating enzyme E2 Q2 (369 aa).

Residues 117–143 form a disordered region; the sequence is DQPLPTGQNGTTEEVTSEEEEEEEMAE. Positions 131–143 are enriched in acidic residues; it reads VTSEEEEEEEMAE. In terms of domain architecture, UBC core spans 198-362; the sequence is QASDRLMKEL…VQIHEKNGWY (165 aa). Residue Cys298 is the Glycyl thioester intermediate of the active site.

This sequence belongs to the ubiquitin-conjugating enzyme family. Post-translationally, auto-ubiquitinated in vitro. As to expression, detected at embryo implantation sites in the luminal epithelium of pregnant endometrium. Detected at low levels in ovary and liver.

The protein localises to the cytoplasm. The enzyme catalyses S-ubiquitinyl-[E1 ubiquitin-activating enzyme]-L-cysteine + [E2 ubiquitin-conjugating enzyme]-L-cysteine = [E1 ubiquitin-activating enzyme]-L-cysteine + S-ubiquitinyl-[E2 ubiquitin-conjugating enzyme]-L-cysteine.. It functions in the pathway protein modification; protein ubiquitination. In terms of biological role, accepts ubiquitin from the E1 complex and catalyzes its covalent attachment to other proteins. In vitro catalyzes 'Lys-48'-linked polyubiquitination. The chain is Ubiquitin-conjugating enzyme E2 Q2 (UBE2Q2) from Oryctolagus cuniculus (Rabbit).